The following is a 311-amino-acid chain: Homeobox protein CDX-2 (311 aa).

S60 carries the phosphoserine modification. Residues 111 to 151 (EYHAHHHPHHHPHHPAASPSCASGLLQTLNLGPPGPAATAA) form a disordered region. Residues 114 to 124 (AHHHPHHHPHH) show a composition bias toward basic residues. The tract at residues 185–215 (KDKYRVVYTDHQRLELEKEFHFSRYITIRRK) is interaction with DNA. The segment at residues 185-244 (KDKYRVVYTDHQRLELEKEFHFSRYITIRRKSELAATLGLSERQVKIWFQNRRAKERKIK) is a DNA-binding region (homeobox). Residues 227–241 (RQVKIWFQNRRAKER) form an interaction with 5-mCpG DNA region. Residues 239-311 (KERKIKKKQQ…GGVLNSTVTQ (73 aa)) form a disordered region. A compositionally biased stretch (low complexity) spans 248 to 257 (QQQQQQQQQQ). Residues 258–268 (PPQPPPQPSQP) show a composition bias toward pro residues. At S281 the chain carries Phosphoserine; by CDK2. The 4S motif; modulates transactivation activity and protein stability signature appears at 281-293 (SPVTSLQGSVPGS). Residues 285 to 298 (SLQGSVPGSVPGVL) show a composition bias toward low complexity.

The protein belongs to the Caudal homeobox family. As to quaternary structure, can bind DNA as a monomer or homodimer. In terms of processing, ubiquitinated, leading to its degradation by the proteasome. Post-translationally, phosphorylation at Ser-60 reduces transactivation capacity. Phosphorylation at Ser-281 reduces transactivation capacity and increases ubiquitin-dependent proteasome degradation. In the intestine, detected in ileum and proximal and distal colon (at protein level). In adult small intestine, predominantly localized in crypt and lower villus cells of the epithelium (at protein level). Expressed in the intestine but not detected in other tissues including stomach, liver, kidney, spleen, brain, heart, lung, pancreas, skeletal muscle and testis. Expressed specifically in gut epithelium where it is not restricted to a particular cell lineage. Abundant expression is seen in the proximal colon with slightly lower levels in distal colon. Expression in the proximal colon is not restricted either to a particular cell lineage or stage of differentiation while in the distal colon it is more abundant in the differentiated cells towards the top of the crypt.

It localises to the nucleus. Functionally, transcription factor which regulates the transcription of multiple genes expressed in the intestinal epithelium. Binds to the promoter of the intestinal sucrase-isomaltase SI and activates SI transcription. Binds to the DNA sequence 5'-ATAAAAACTTAT-3' in the promoter region of VDR and activates VDR transcription. Binds to and activates transcription of LPH. Activates transcription of CLDN2 and intestinal mucin MUC2. Binds to the 5'-AATTTTTTACAACACCT-3' DNA sequence in the promoter region of CA1 and activates CA1 transcription. Important in broad range of functions from early differentiation to maintenance of the intestinal epithelial lining of both the small and large intestine. Binds preferentially to methylated DNA. This Mus musculus (Mouse) protein is Homeobox protein CDX-2 (Cdx2).